A 334-amino-acid chain; its full sequence is Biotin synthase (334 aa).

Residues 55 to 280 enclose the Radical SAM core domain; sequence EEIEVEGIIS…HTMLRFAGGR (226 aa). The [4Fe-4S] cluster site is built by C70, C74, and C77. [2Fe-2S] cluster-binding residues include C113, C205, and R275.

This sequence belongs to the radical SAM superfamily. Biotin synthase family. As to quaternary structure, homodimer. It depends on [4Fe-4S] cluster as a cofactor. Requires [2Fe-2S] cluster as cofactor.

It carries out the reaction (4R,5S)-dethiobiotin + (sulfur carrier)-SH + 2 reduced [2Fe-2S]-[ferredoxin] + 2 S-adenosyl-L-methionine = (sulfur carrier)-H + biotin + 2 5'-deoxyadenosine + 2 L-methionine + 2 oxidized [2Fe-2S]-[ferredoxin]. It participates in cofactor biosynthesis; biotin biosynthesis; biotin from 7,8-diaminononanoate: step 2/2. Catalyzes the conversion of dethiobiotin (DTB) to biotin by the insertion of a sulfur atom into dethiobiotin via a radical-based mechanism. The chain is Biotin synthase from Corynebacterium glutamicum (strain R).